We begin with the raw amino-acid sequence, 128 residues long: Myelin basic protein (128 aa).

2 disordered regions span residues 1–24 and 82–128; these read AGGA…EPAT and TDGQ…PARR. 2 stretches are compositionally biased toward basic and acidic residues: residues 11–23 and 96–107; these read GSRK…KEPA and KSREAYRGRKDG.

It belongs to the myelin basic protein family. In terms of processing, the N-terminus is blocked.

Its subcellular location is the myelin membrane. This protein may function to maintain proper structure of myelin. The protein is Myelin basic protein (MBP) of Carcharhinus obscurus (Dusky shark).